The chain runs to 251 residues: Cytochrome P450 monooxygenase ppzG (251 aa).

Cysteine 250 is a heme binding site.

Belongs to the cytochrome P450 family. It depends on heme as a cofactor.

It participates in secondary metabolite biosynthesis. Its function is as follows. Cytochrome P450 monooxygenase; part of the gene cluster that mediates the biosynthesis of pyrrolopyrazines, secondary metabolites showing insecticidal activity. The role of ppzG within the pathway has still to be determined. The single multifunctional NRPS ppzA is sufficient to produce peramine via condensation of 1-pyrroline-5-carboxylate and arginine, N-methylation of the alpha-amino group of arginine and reduction of the thioester and the cyclization to form an iminium ion resulting in release from the peptide synthetase. Deprotonation of this intermediate and oxidation of the pyrroline ring would give rise to peramine. In Epichloe species that produce only peramine, the peramine synthetase gene is not localized in a gene cluster, in contrast to Metarhizium species that contain additional pyrrolopyrazine biosynthesis genes. The 2-oxoglutarate-Fe(II) type oxidoreductase ppzC hydroxylates peramine to yield the newly identified compound 8-hydroxyperamine whereas ppzD converts L-proline into trans-4-hydroxy-L-proline, a precursor of peramine biosynthesis. This Metarhizium rileyi (strain RCEF 4871) (Nomuraea rileyi) protein is Cytochrome P450 monooxygenase ppzG.